Consider the following 571-residue polypeptide: Acetolactate synthase large subunit (571 aa).

Glutamate 51 contacts thiamine diphosphate. Residues arginine 153, 261-282 (HGTY…IGVR), and 304-323 (DIDP…IVGD) contribute to the FAD site. The segment at 394–474 (QHQMFTALYY…VLILNLNNSS (81 aa)) is thiamine pyrophosphate binding. Residues aspartate 445 and asparagine 472 each contribute to the Mg(2+) site.

This sequence belongs to the TPP enzyme family. Dimer of large and small chains. Mg(2+) serves as cofactor. The cofactor is thiamine diphosphate.

The enzyme catalyses 2 pyruvate + H(+) = (2S)-2-acetolactate + CO2. It participates in amino-acid biosynthesis; L-isoleucine biosynthesis; L-isoleucine from 2-oxobutanoate: step 1/4. It functions in the pathway amino-acid biosynthesis; L-valine biosynthesis; L-valine from pyruvate: step 1/4. The protein is Acetolactate synthase large subunit (ilvI) of Buchnera aphidicola subsp. Schizaphis graminum (strain Sg).